The following is a 295-amino-acid chain: Ribosomal protein L11 methyltransferase (295 aa).

S-adenosyl-L-methionine contacts are provided by Thr150, Gly171, Asp193, and Asn232.

Belongs to the methyltransferase superfamily. PrmA family.

It localises to the cytoplasm. The enzyme catalyses L-lysyl-[protein] + 3 S-adenosyl-L-methionine = N(6),N(6),N(6)-trimethyl-L-lysyl-[protein] + 3 S-adenosyl-L-homocysteine + 3 H(+). Methylates ribosomal protein L11. The chain is Ribosomal protein L11 methyltransferase from Neisseria gonorrhoeae (strain ATCC 700825 / FA 1090).